The primary structure comprises 740 residues: ATP-dependent RNA helicase DBP7 (740 aa).

The segment at 1-104 (MSFNDDDDGM…SNVEQPARVT (104 aa)) is disordered. Over residues 13 to 25 (NFTTDVSDASETV) the composition is skewed to polar residues. A compositionally biased stretch (basic and acidic residues) spans 43–60 (MMMEGRKPRVRGEKRPLE). Residues 72–81 (ASSSNSTSAQ) show a composition bias toward polar residues. The Q motif signature appears at 149–178 (DTFDSFGITDTMVSHLNVKMKISKPTKIQK). The region spanning 182-376 (PPFLQAQNDL…NVTLQNYKLI (195 aa)) is the Helicase ATP-binding domain. 195 to 202 (AQTGSGKT) provides a ligand contact to ATP. Positions 311-314 (DEGD) match the DEAD box motif. A Helicase C-terminal domain is found at 414-607 (TITQKHYKEG…VLRPAFEGLN (194 aa)). The segment at 695 to 721 (SMGLQQGKAGAAAAASQKKPKEDSKSK) is disordered. Residues 697-711 (GLQQGKAGAAAAASQ) are compositionally biased toward low complexity.

The protein belongs to the DEAD box helicase family. DDX31/DBP7 subfamily.

Its subcellular location is the nucleus. It localises to the nucleolus. It carries out the reaction ATP + H2O = ADP + phosphate + H(+). ATP-binding RNA helicase involved in the biogenesis of 60S ribosomal subunits and is required for the normal formation of 25S and 5.8S rRNAs. The protein is ATP-dependent RNA helicase DBP7 (DBP7) of Kluyveromyces lactis (strain ATCC 8585 / CBS 2359 / DSM 70799 / NBRC 1267 / NRRL Y-1140 / WM37) (Yeast).